Consider the following 484-residue polypeptide: Protein nucleotidyltransferase YdiU (484 aa).

ATP contacts are provided by G81, G83, R84, K103, D115, G116, R166, and R173. D244 acts as the Proton acceptor in catalysis. Mg(2+) is bound by residues N245 and D254. ATP is bound at residue D254.

This sequence belongs to the SELO family. Requires Mg(2+) as cofactor. It depends on Mn(2+) as a cofactor.

It carries out the reaction L-seryl-[protein] + ATP = 3-O-(5'-adenylyl)-L-seryl-[protein] + diphosphate. The enzyme catalyses L-threonyl-[protein] + ATP = 3-O-(5'-adenylyl)-L-threonyl-[protein] + diphosphate. It catalyses the reaction L-tyrosyl-[protein] + ATP = O-(5'-adenylyl)-L-tyrosyl-[protein] + diphosphate. The catalysed reaction is L-histidyl-[protein] + UTP = N(tele)-(5'-uridylyl)-L-histidyl-[protein] + diphosphate. It carries out the reaction L-seryl-[protein] + UTP = O-(5'-uridylyl)-L-seryl-[protein] + diphosphate. The enzyme catalyses L-tyrosyl-[protein] + UTP = O-(5'-uridylyl)-L-tyrosyl-[protein] + diphosphate. Its function is as follows. Nucleotidyltransferase involved in the post-translational modification of proteins. It can catalyze the addition of adenosine monophosphate (AMP) or uridine monophosphate (UMP) to a protein, resulting in modifications known as AMPylation and UMPylation. The polypeptide is Protein nucleotidyltransferase YdiU (Shewanella baltica (strain OS223)).